Here is a 624-residue protein sequence, read N- to C-terminus: Hemocyanin E chain (624 aa).

6 residues coordinate Cu cation: histidine 169, histidine 173, histidine 200, histidine 320, histidine 324, and histidine 360. N-linked (GlcNAc...) asparagine glycosylation is present at asparagine 445. Residues cysteine 529 and cysteine 577 are joined by a disulfide bond.

Belongs to the tyrosinase family. Hemocyanin subfamily. Tarantula hemocyanin is a 24-chain polymer with seven different chains identified. In terms of tissue distribution, hemolymph.

The protein resides in the secreted. It localises to the extracellular space. In terms of biological role, hemocyanins are copper-containing oxygen carriers occurring freely dissolved in the hemolymph of many mollusks and arthropods. This is Hemocyanin E chain (HCE) from Aphonopelma sp. (American tarantula).